The chain runs to 306 residues: Secreted RxLR effector protein 76 (306 aa).

Residues 1–21 (MSGAFYVFTALLLVASDQIAA) form the signal peptide. The short motif at 48-65 (RFLRGSRDEPDNLANEER) is the RxLR-dEER element. The disordered stretch occupies residues 105-142 (AAKAVKKRPRGAKAGRKMPRAAEAEAVKKVPRAGTAVK). Residues 107–123 (KAVKKRPRGAKAGRKMP) are compositionally biased toward basic residues.

This sequence belongs to the RxLR effector family.

Its subcellular location is the secreted. It localises to the host nucleus. Functionally, secreted effector that partially suppresses the host cell death induced by cell death-inducing proteins. The polypeptide is Secreted RxLR effector protein 76 (Plasmopara viticola (Downy mildew of grapevine)).